The chain runs to 146 residues: NADH-quinone oxidoreductase subunit A (146 aa).

The next 3 helical transmembrane spans lie at 16–36 (FAIFLIVAIGLCCLMLIGGWF), 68–88 (FYLVAMFFVIFDVEALYLFAW), and 98–118 (VGFVEAAIFILVLLAGLVYLV).

This sequence belongs to the complex I subunit 3 family. NDH-1 is composed of 13 different subunits. Subunits NuoA, H, J, K, L, M, N constitute the membrane sector of the complex.

It localises to the cell inner membrane. The enzyme catalyses a quinone + NADH + 5 H(+)(in) = a quinol + NAD(+) + 4 H(+)(out). Functionally, NDH-1 shuttles electrons from NADH, via FMN and iron-sulfur (Fe-S) centers, to quinones in the respiratory chain. The immediate electron acceptor for the enzyme in this species is believed to be ubiquinone. Couples the redox reaction to proton translocation (for every two electrons transferred, four hydrogen ions are translocated across the cytoplasmic membrane), and thus conserves the redox energy in a proton gradient. The chain is NADH-quinone oxidoreductase subunit A from Enterobacter sp. (strain 638).